The primary structure comprises 419 residues: MTATPREFDIVLYGATGFVGKLTAEYLARAGGDARIALAGRSTQRVLAVREALGESAQTWPILTADASLPSTLQAMAARAQVVVTTVGPYTRYGLPLVAACAAAGTDYADLTGEPMFMRNSIDLYHKQAADTGARIVHACGFDSVPSDLSVYALYHAAREDGAGELTDTNCVVRSFKGGFSGGTIASMLEVLSTASNDPDARRQLSDPYMLSPDRGAEPELGPQPDLPSRRGRRLAPELAGVWTAGFIMAPTNTRIVRRSNALLDWAYGRRFRYSETMSVGSTVLAPVVSVVGGGVGNAMFGLASRYIRLLPRGLVKRVVPKPGTGPSAAARERGYYRIETYTTTTTGARYLARMAQDGDPGYKATSVLLGECGLALALDRDKLSDMRGVLTPAAAMGDALLERLPAAGVSLQTTRLAS.

An Isoglutamyl lysine isopeptide (Lys-Gln) (interchain with Q-Cter in protein Pup) cross-link involves residue Lys-127. A disordered region spans residues 197 to 232; sequence NDPDARRQLSDPYMLSPDRGAEPELGPQPDLPSRRG. Residues 284 to 304 traverse the membrane as a helical segment; sequence VLAPVVSVVGGGVGNAMFGLA.

The protein belongs to the saccharopine dehydrogenase family. Enoyl reductase subfamily.

The protein resides in the cell membrane. The protein is Putative trans-acting enoyl reductase MT2525 of Mycobacterium tuberculosis (strain CDC 1551 / Oshkosh).